Reading from the N-terminus, the 328-residue chain is Carbonic anhydrase-related protein 10 (328 aa).

The Alpha-carbonic anhydrase domain maps to 31 to 301 (GWWAYKEVVQ…LNNRCIRTNI (271 aa)).

It belongs to the alpha-carbonic anhydrase family.

In terms of biological role, does not have a catalytic activity. The chain is Carbonic anhydrase-related protein 10 (CA10) from Macaca fascicularis (Crab-eating macaque).